Consider the following 419-residue polypeptide: Tyrosine--tRNA ligase (419 aa).

Tyr36 contributes to the L-tyrosine binding site. Positions 41–50 (PTGDSMHIGH) match the 'HIGH' region motif. Residues Tyr168 and Gln172 each coordinate L-tyrosine. A 'KMSKS' region motif is present at residues 230–234 (KFGKT). Residue Lys233 coordinates ATP. The 68-residue stretch at 352 to 419 (KNIVDFLVDA…KKKYFLARVK (68 aa)) folds into the S4 RNA-binding domain.

It belongs to the class-I aminoacyl-tRNA synthetase family. TyrS type 1 subfamily. As to quaternary structure, homodimer.

It localises to the cytoplasm. It carries out the reaction tRNA(Tyr) + L-tyrosine + ATP = L-tyrosyl-tRNA(Tyr) + AMP + diphosphate + H(+). In terms of biological role, catalyzes the attachment of tyrosine to tRNA(Tyr) in a two-step reaction: tyrosine is first activated by ATP to form Tyr-AMP and then transferred to the acceptor end of tRNA(Tyr). The protein is Tyrosine--tRNA ligase of Latilactobacillus sakei subsp. sakei (strain 23K) (Lactobacillus sakei subsp. sakei).